The chain runs to 295 residues: Protoheme IX farnesyltransferase (295 aa).

Helical transmembrane passes span 30–50 (LVVL…HPLI), 51–71 (AVIS…INMW), 93–115 (ISRS…IMMI), 119–136 (YISG…IYVY), 148–168 (IVIG…SVTG), 175–195 (LVLF…LSLL), 219–239 (IHIL…GLFL), 244–264 (LYEI…FQVF), and 275–295 (MFTY…LSSF).

The protein belongs to the UbiA prenyltransferase family. Protoheme IX farnesyltransferase subfamily.

It localises to the cell inner membrane. The enzyme catalyses heme b + (2E,6E)-farnesyl diphosphate + H2O = Fe(II)-heme o + diphosphate. It participates in porphyrin-containing compound metabolism; heme O biosynthesis; heme O from protoheme: step 1/1. Its function is as follows. Converts heme B (protoheme IX) to heme O by substitution of the vinyl group on carbon 2 of heme B porphyrin ring with a hydroxyethyl farnesyl side group. This is Protoheme IX farnesyltransferase from Ehrlichia ruminantium (strain Welgevonden).